Consider the following 143-residue polypeptide: MFMGEFRHNIDTKGRMIVPSKLREELGEQFVLTRGLDGCLFGYPMKEWANLETKLNDMPLAKKDARTFVRFFYSAATECELDKQGRINIPSTLRNYAALTKECVVIGVSNRIEIWDEARWQEFSEVAAENFDEIAENMIDFGL.

2 SpoVT-AbrB domains span residues 5–47 (EFRH…PMKE) and 76–119 (ATEC…DEAR).

The protein belongs to the MraZ family. Forms oligomers.

It localises to the cytoplasm. It is found in the nucleoid. The chain is Transcriptional regulator MraZ from Enterococcus hirae.